Here is a 302-residue protein sequence, read N- to C-terminus: Nucleotide-binding protein Rsph17029_0317 (302 aa).

15–22 (GPSGAGRT) contributes to the ATP binding site. 62-65 (DVRN) is a GTP binding site.

This sequence belongs to the RapZ-like family.

In terms of biological role, displays ATPase and GTPase activities. The protein is Nucleotide-binding protein Rsph17029_0317 of Cereibacter sphaeroides (strain ATCC 17029 / ATH 2.4.9) (Rhodobacter sphaeroides).